The primary structure comprises 1413 residues: DNA-directed RNA polymerase subunit beta' (1413 aa).

Residues cysteine 70, cysteine 72, cysteine 85, and cysteine 88 each coordinate Zn(2+). Mg(2+) is bound by residues aspartate 460, aspartate 462, and aspartate 464. Zn(2+) contacts are provided by cysteine 819, cysteine 893, cysteine 900, and cysteine 903. A disordered region spans residues glutamate 1392–glutamate 1413.

The protein belongs to the RNA polymerase beta' chain family. As to quaternary structure, the RNAP catalytic core consists of 2 alpha, 1 beta, 1 beta' and 1 omega subunit. When a sigma factor is associated with the core the holoenzyme is formed, which can initiate transcription. It depends on Mg(2+) as a cofactor. Zn(2+) serves as cofactor.

It catalyses the reaction RNA(n) + a ribonucleoside 5'-triphosphate = RNA(n+1) + diphosphate. In terms of biological role, DNA-dependent RNA polymerase catalyzes the transcription of DNA into RNA using the four ribonucleoside triphosphates as substrates. The protein is DNA-directed RNA polymerase subunit beta' of Burkholderia orbicola (strain MC0-3).